A 178-amino-acid polypeptide reads, in one-letter code: Fatty-acid and retinol-binding protein 1 (178 aa).

An N-terminal signal peptide occupies residues 1–16; that stretch reads MYHQLILMALIGVIMA. N-linked (GlcNAc...) asparagine glycosylation is found at N44 and N75. 2 coiled-coil regions span residues 67–89 and 123–153; these read DAALEALKNKSDKLYQKAVELRN and KLDVEKLKQAARDIIAKYEALNEETKEELKA. Residue N157 is glycosylated (N-linked (GlcNAc...) asparagine).

Belongs to the fatty-acid and retinol-binding protein (FARBP) family. In terms of processing, N-glycosylated.

It is found in the secreted. Binds retinol and different fatty acids. The sequence is that of Fatty-acid and retinol-binding protein 1 from Acanthocheilonema viteae (Filarial nematode worm).